Here is a 320-residue protein sequence, read N- to C-terminus: Undecaprenyl-diphosphatase (320 aa).

The next 8 membrane-spanning stretches (helical) occupy residues 9-29 (FVLISAVSAALSVVLFPLEVF), 82-102 (GVAFTAIIQLGSIAAVLWYFW), 130-150 (LGIVLGTIPIVFFGLLIKTFI), 161-181 (LGAIAVASIVMSLLLGVGEKL), 191-211 (LTMQDGLLMGLAQALTLIPGV), 236-256 (FLLGIPAITLAGLVELKDLLA), 265-285 (LPLIMGVISAAIFSYLAIAGL), and 296-316 (VFIWYRLVFGVAILGAISAGI).

Belongs to the UppP family.

The protein resides in the cell inner membrane. The catalysed reaction is di-trans,octa-cis-undecaprenyl diphosphate + H2O = di-trans,octa-cis-undecaprenyl phosphate + phosphate + H(+). Its function is as follows. Catalyzes the dephosphorylation of undecaprenyl diphosphate (UPP). Confers resistance to bacitracin. This is Undecaprenyl-diphosphatase from Nostoc sp. (strain PCC 7120 / SAG 25.82 / UTEX 2576).